We begin with the raw amino-acid sequence, 317 residues long: Putative pyridoxal kinase BUD17 (317 aa).

2 residues coordinate substrate: S16 and Y128. ATP is bound by residues 190-191 (TS) and 220-232 (EIPK…SGSG). D233 provides a ligand contact to substrate.

The protein belongs to the pyridoxine kinase family. It depends on a divalent metal cation as a cofactor.

The protein resides in the cytoplasm. It localises to the nucleus. It carries out the reaction pyridoxal + ATP = pyridoxal 5'-phosphate + ADP + H(+). Its function is as follows. Required for synthesis of pyridoxal-5-phosphate from vitamin B6. Important for bud site selection. This is Putative pyridoxal kinase BUD17 (BUD17) from Saccharomyces cerevisiae (strain ATCC 204508 / S288c) (Baker's yeast).